The primary structure comprises 312 residues: Methionyl-tRNA formyltransferase (312 aa).

Position 109–112 (109–112 (SLLP)) interacts with (6S)-5,6,7,8-tetrahydrofolate.

The protein belongs to the Fmt family.

It carries out the reaction L-methionyl-tRNA(fMet) + (6R)-10-formyltetrahydrofolate = N-formyl-L-methionyl-tRNA(fMet) + (6S)-5,6,7,8-tetrahydrofolate + H(+). In terms of biological role, attaches a formyl group to the free amino group of methionyl-tRNA(fMet). The formyl group appears to play a dual role in the initiator identity of N-formylmethionyl-tRNA by promoting its recognition by IF2 and preventing the misappropriation of this tRNA by the elongation apparatus. This chain is Methionyl-tRNA formyltransferase, found in Geotalea daltonii (strain DSM 22248 / JCM 15807 / FRC-32) (Geobacter daltonii).